Consider the following 214-residue polypeptide: Phosphatidylserine decarboxylase proenzyme (214 aa).

Serine 182 functions as the Schiff-base intermediate with substrate; via pyruvic acid in the catalytic mechanism. Serine 182 carries the post-translational modification Pyruvic acid (Ser); by autocatalysis.

It belongs to the phosphatidylserine decarboxylase family. PSD-A subfamily. In terms of assembly, heterodimer of a large membrane-associated beta subunit and a small pyruvoyl-containing alpha subunit. Requires pyruvate as cofactor. In terms of processing, is synthesized initially as an inactive proenzyme. Formation of the active enzyme involves a self-maturation process in which the active site pyruvoyl group is generated from an internal serine residue via an autocatalytic post-translational modification. Two non-identical subunits are generated from the proenzyme in this reaction, and the pyruvate is formed at the N-terminus of the alpha chain, which is derived from the carboxyl end of the proenzyme. The post-translation cleavage follows an unusual pathway, termed non-hydrolytic serinolysis, in which the side chain hydroxyl group of the serine supplies its oxygen atom to form the C-terminus of the beta chain, while the remainder of the serine residue undergoes an oxidative deamination to produce ammonia and the pyruvoyl prosthetic group on the alpha chain.

It is found in the cell membrane. It catalyses the reaction a 1,2-diacyl-sn-glycero-3-phospho-L-serine + H(+) = a 1,2-diacyl-sn-glycero-3-phosphoethanolamine + CO2. It functions in the pathway phospholipid metabolism; phosphatidylethanolamine biosynthesis; phosphatidylethanolamine from CDP-diacylglycerol: step 2/2. Catalyzes the formation of phosphatidylethanolamine (PtdEtn) from phosphatidylserine (PtdSer). This is Phosphatidylserine decarboxylase proenzyme from Burkholderia ambifaria (strain MC40-6).